The primary structure comprises 401 residues: Elongation factor Tu 1 (401 aa).

In terms of domain architecture, tr-type G spans K10–V209. The interval G19–T26 is G1. G19–T26 is a GTP binding site. T26 serves as a coordination point for Mg(2+). Residues G60–A64 form a G2 region. Residues D81–G84 are G3. GTP-binding positions include D81–H85 and N136–D139. Residues N136–D139 are G4. The tract at residues S174–L176 is G5.

This sequence belongs to the TRAFAC class translation factor GTPase superfamily. Classic translation factor GTPase family. EF-Tu/EF-1A subfamily. As to quaternary structure, monomer.

It is found in the cytoplasm. It catalyses the reaction GTP + H2O = GDP + phosphate + H(+). Functionally, GTP hydrolase that promotes the GTP-dependent binding of aminoacyl-tRNA to the A-site of ribosomes during protein biosynthesis. The chain is Elongation factor Tu 1 from Roseiflexus castenholzii (strain DSM 13941 / HLO8).